Consider the following 105-residue polypeptide: Replication initiation control protein YabA (105 aa).

Positions 79, 81, 95, and 98 each coordinate Zn(2+).

The protein belongs to the YabA family. Homotetramer. Interacts with both DnaA and DnaN, acting as a bridge between these two proteins. The cofactor is Zn(2+).

It localises to the cytoplasm. Its subcellular location is the nucleoid. Involved in control of chromosome replication initiation. Inhibits the cooperative binding of DnaA to the oriC region, thus negatively regulating initiation of chromosome replication. Inhibits the ability of DnaA-ATP to form a helix on DNA; does not disassemble preformed DnaA-DNA helices. Decreases the residence time of DnaA on the chromosome at its binding sites (oriC, replication forks and promoter-binding sites). Tethers DnaA to the replication machinery via the DNA polymerase beta sliding clamp subunit (dnaN). Associates with oriC and other DnaA targets on the chromosome in a DnaA-dependent manner. This chain is Replication initiation control protein YabA, found in Streptococcus pneumoniae serotype 2 (strain D39 / NCTC 7466).